We begin with the raw amino-acid sequence, 256 residues long: Ubiquinone/menaquinone biosynthesis C-methyltransferase UbiE (256 aa).

Residues Thr79, Asp100, and 128-129 (DA) each bind S-adenosyl-L-methionine.

Belongs to the class I-like SAM-binding methyltransferase superfamily. MenG/UbiE family.

It carries out the reaction a 2-demethylmenaquinol + S-adenosyl-L-methionine = a menaquinol + S-adenosyl-L-homocysteine + H(+). It catalyses the reaction a 2-methoxy-6-(all-trans-polyprenyl)benzene-1,4-diol + S-adenosyl-L-methionine = a 5-methoxy-2-methyl-3-(all-trans-polyprenyl)benzene-1,4-diol + S-adenosyl-L-homocysteine + H(+). Its pathway is quinol/quinone metabolism; menaquinone biosynthesis; menaquinol from 1,4-dihydroxy-2-naphthoate: step 2/2. It functions in the pathway cofactor biosynthesis; ubiquinone biosynthesis. Methyltransferase required for the conversion of demethylmenaquinol (DMKH2) to menaquinol (MKH2) and the conversion of 2-polyprenyl-6-methoxy-1,4-benzoquinol (DDMQH2) to 2-polyprenyl-3-methyl-6-methoxy-1,4-benzoquinol (DMQH2). This is Ubiquinone/menaquinone biosynthesis C-methyltransferase UbiE from Pseudomonas paraeruginosa (strain DSM 24068 / PA7) (Pseudomonas aeruginosa (strain PA7)).